The following is a 212-amino-acid chain: Thymidylate kinase (212 aa).

10–17 contacts ATP; it reads GLEGAGKS.

Belongs to the thymidylate kinase family.

It carries out the reaction dTMP + ATP = dTDP + ADP. Functionally, phosphorylation of dTMP to form dTDP in both de novo and salvage pathways of dTTP synthesis. The chain is Thymidylate kinase from Vibrio cholerae serotype O1 (strain ATCC 39541 / Classical Ogawa 395 / O395).